The primary structure comprises 340 residues: MYRFLSGIKVVEIAGLAPVPHCGMMLADFGADVTVIDKKNPAIEQRLNRGKTMKQLDLKNPEDIKKVRDLCQTSDVLLDPYRPGTLEKMGLDPSTLWNNNKGLIICKISGYGQTGRMSQETGHDINYVALSGMLPTFSGVNATRPWPPANMLADFAGGGLSAAFGILSAIYARSHNGGKGCLLDCSMTEGVAYLSSFVQHYYDQPNLFTDKYALFSGECPIYRTYKTKDDKFVAVGAVEPKFYQNLFKLLNVDGRDLFVNPGKITEDLESRFLQKTRDKWANIFKGQECCVTPVLDIHEVGSYGQHVDRNSFTKTSSNWIANPSPRVWTQDELAALSSKK.

Asp154 serves as the catalytic Nucleophile.

It belongs to the CoA-transferase III family.

This chain is CaiB/baiF CoA-transferase family protein ZK892.4, found in Caenorhabditis elegans.